The primary structure comprises 566 residues: Mannitol 2-dehydrogenase (566 aa).

106–117 (IVHVGVGGFHRA) provides a ligand contact to NAD(+).

This sequence belongs to the mannitol dehydrogenase family. Monomer.

The catalysed reaction is D-mannitol + NAD(+) = D-fructose + NADH + H(+). Functionally, catalyzes the NAD(H)-dependent interconversion of D-fructose and D-mannitol in the mannitol metabolic pathway. In Pyrenophora tritici-repentis (strain Pt-1C-BFP) (Wheat tan spot fungus), this protein is Mannitol 2-dehydrogenase.